The following is a 428-amino-acid chain: Putative zinc metalloprotease SAR1238 (428 aa).

Zn(2+) is bound at residue H21. Residue E22 is part of the active site. H25 contributes to the Zn(2+) binding site. 4 consecutive transmembrane segments (helical) span residues 172–194 (FLTLFAGPLFNFILALVLFIGLA), 309–331 (GSTYIFSAVVGMLASIFTGGFSF), 352–374 (IISLIGYTALLSVNLGIMNLIPI), and 401–420 (TTIIAIGAIFMVVIMILVTW). The PDZ domain occupies 186–269 (ALVLFIGLAY…TKSVELTPKK (84 aa)).

The protein belongs to the peptidase M50B family. Zn(2+) serves as cofactor.

The protein resides in the cell membrane. In Staphylococcus aureus (strain MRSA252), this protein is Putative zinc metalloprotease SAR1238.